The sequence spans 504 residues: Splicing factor SF3a60 homolog (504 aa).

Position 2 is an N-acetylserine (S2). Disordered regions lie at residues 293-319 (DKKHFARPPHNGKQNGDAKSTHESENA) and 355-374 (YEEMEGEREGEEANTELESD). Residues 356–374 (EEMEGEREGEEANTELESD) are compositionally biased toward acidic residues. The residue at position 373 (S373) is a Phosphoserine. A Matrin-type zinc finger spans residues 409–440 (FKCEICGNYSYWGRRAFERHFKEWRHQHGMRC).

This sequence belongs to the SF3A3 family. In terms of tissue distribution, expressed at moderate levels in all sporophytic tissues with strongest expression in gametophytes.

It is found in the nucleus. In terms of biological role, splicing factor homolog to SF3a60 that may be involved in pre-spliceosome formation. Is necessary for gametic cell fate determination. This Arabidopsis thaliana (Mouse-ear cress) protein is Splicing factor SF3a60 homolog.